The sequence spans 297 residues: UDP-N-acetylenolpyruvoylglucosamine reductase (297 aa).

Positions 27 to 191 (TGGNADIFVM…LDATFSLELE (165 aa)) constitute an FAD-binding PCMH-type domain. Arg170 is an active-site residue. Ser220 functions as the Proton donor in the catalytic mechanism. The active site involves Glu290.

Belongs to the MurB family. Requires FAD as cofactor.

It is found in the cytoplasm. The enzyme catalyses UDP-N-acetyl-alpha-D-muramate + NADP(+) = UDP-N-acetyl-3-O-(1-carboxyvinyl)-alpha-D-glucosamine + NADPH + H(+). Its pathway is cell wall biogenesis; peptidoglycan biosynthesis. Its function is as follows. Cell wall formation. This chain is UDP-N-acetylenolpyruvoylglucosamine reductase, found in Listeria welshimeri serovar 6b (strain ATCC 35897 / DSM 20650 / CCUG 15529 / CIP 8149 / NCTC 11857 / SLCC 5334 / V8).